The following is a 389-amino-acid chain: Succinate--CoA ligase [ADP-forming] subunit beta (389 aa).

Residues 9-244 (KELLRQFNVP…IDEEDAAEIE (236 aa)) form the ATP-grasp domain. ATP contacts are provided by residues lysine 46, 53–55 (GRG), glutamate 99, alanine 102, and glutamate 107. 2 residues coordinate Mg(2+): asparagine 199 and aspartate 213. Substrate-binding positions include asparagine 264 and 321–323 (GIM).

This sequence belongs to the succinate/malate CoA ligase beta subunit family. Heterotetramer of two alpha and two beta subunits. Requires Mg(2+) as cofactor.

It catalyses the reaction succinate + ATP + CoA = succinyl-CoA + ADP + phosphate. The enzyme catalyses GTP + succinate + CoA = succinyl-CoA + GDP + phosphate. It functions in the pathway carbohydrate metabolism; tricarboxylic acid cycle; succinate from succinyl-CoA (ligase route): step 1/1. In terms of biological role, succinyl-CoA synthetase functions in the citric acid cycle (TCA), coupling the hydrolysis of succinyl-CoA to the synthesis of either ATP or GTP and thus represents the only step of substrate-level phosphorylation in the TCA. The beta subunit provides nucleotide specificity of the enzyme and binds the substrate succinate, while the binding sites for coenzyme A and phosphate are found in the alpha subunit. This Polynucleobacter necessarius subsp. necessarius (strain STIR1) protein is Succinate--CoA ligase [ADP-forming] subunit beta.